Reading from the N-terminus, the 156-residue chain is Snaclec rhinocetin subunit alpha (156 aa).

The first 23 residues, 1–23 (MGRFIFLSSGWLVVFLSLSGTGA), serve as a signal peptide directing secretion. Intrachain disulfides connect Cys27–Cys38, Cys55–Cys150, and Cys125–Cys142. The C-type lectin domain occupies 34-151 (YEGHCYKFFF…CGDNYPFVCM (118 aa)).

It belongs to the snaclec family. In terms of assembly, heterodimer; disulfide-linked. Expressed by the venom gland.

Its subcellular location is the secreted. In terms of biological role, antagonist of the alpha-2 subunit of the integrin alpha-2/beta-1 (ITGA2/ITGB1) on human platelets and endothelial cells. This protein inhibits collagen-stimulated activation of human platelets in a dose-dependent manner. In addition, it antagonizes the binding of monoclonal antibodies against the alpha-2 subunit of integrin alpha-2/beta-1 to platelets and it coimmunoprecipitates with this integrin. This Bitis rhinoceros (West African gaboon viper) protein is Snaclec rhinocetin subunit alpha.